The chain runs to 256 residues: Thiazole synthase (256 aa).

Residue Lys95 is the Schiff-base intermediate with DXP of the active site. 1-deoxy-D-xylulose 5-phosphate contacts are provided by residues Gly156, 182–183, and 204–205; these read AG and NT.

This sequence belongs to the ThiG family. Homotetramer. Forms heterodimers with either ThiH or ThiS.

It is found in the cytoplasm. It carries out the reaction [ThiS sulfur-carrier protein]-C-terminal-Gly-aminoethanethioate + 2-iminoacetate + 1-deoxy-D-xylulose 5-phosphate = [ThiS sulfur-carrier protein]-C-terminal Gly-Gly + 2-[(2R,5Z)-2-carboxy-4-methylthiazol-5(2H)-ylidene]ethyl phosphate + 2 H2O + H(+). Its pathway is cofactor biosynthesis; thiamine diphosphate biosynthesis. Its function is as follows. Catalyzes the rearrangement of 1-deoxy-D-xylulose 5-phosphate (DXP) to produce the thiazole phosphate moiety of thiamine. Sulfur is provided by the thiocarboxylate moiety of the carrier protein ThiS. In vitro, sulfur can be provided by H(2)S. In Escherichia coli O17:K52:H18 (strain UMN026 / ExPEC), this protein is Thiazole synthase.